The primary structure comprises 294 residues: 4-hydroxy-tetrahydrodipicolinate synthase (294 aa).

A pyruvate-binding site is contributed by T45. Y133 functions as the Proton donor/acceptor in the catalytic mechanism. K161 functions as the Schiff-base intermediate with substrate in the catalytic mechanism. Residue I203 coordinates pyruvate.

It belongs to the DapA family. As to quaternary structure, homotetramer; dimer of dimers.

The protein resides in the cytoplasm. The enzyme catalyses L-aspartate 4-semialdehyde + pyruvate = (2S,4S)-4-hydroxy-2,3,4,5-tetrahydrodipicolinate + H2O + H(+). It functions in the pathway amino-acid biosynthesis; L-lysine biosynthesis via DAP pathway; (S)-tetrahydrodipicolinate from L-aspartate: step 3/4. Its function is as follows. Catalyzes the condensation of (S)-aspartate-beta-semialdehyde [(S)-ASA] and pyruvate to 4-hydroxy-tetrahydrodipicolinate (HTPA). The sequence is that of 4-hydroxy-tetrahydrodipicolinate synthase from Thioalkalivibrio sulfidiphilus (strain HL-EbGR7).